Here is a 637-residue protein sequence, read N- to C-terminus: Multicopper oxidase LPR1 homolog 5 (637 aa).

The N-terminal stretch at 1 to 21 (MSPRIQQLAAVLLAAVVVVAA) is a signal peptide. N100 is a glycosylation site (N-linked (GlcNAc...) asparagine). H209 and H211 together coordinate Cu cation. A glycan (N-linked (GlcNAc...) asparagine) is linked at N234. Residues H257 and H259 each coordinate Cu cation. N-linked (GlcNAc...) asparagine glycosylation is found at N308, N349, N357, N425, N482, and N516. The 73-residue stretch at 334-406 (PYLSVQRRRY…IVDFSRLPAA (73 aa)) folds into the Plastocyanin-like domain. Residues H522, H525, and H527 each contribute to the Cu cation site. N-linked (GlcNAc...) asparagine glycosylation is present at N553. Cu cation is bound by residues H618, C619, H620, H624, and M629.

It belongs to the multicopper oxidase family. Requires Cu cation as cofactor. As to expression, highly expressed in roots and basal stems.

It is found in the endoplasmic reticulum membrane. Multicopper oxidase that may play a role in the maintenance of inorganic phosphate homeostasis. The protein is Multicopper oxidase LPR1 homolog 5 of Oryza sativa subsp. japonica (Rice).